The primary structure comprises 100 residues: Small ribosomal subunit protein uS14 (100 aa).

It belongs to the universal ribosomal protein uS14 family. In terms of assembly, part of the 30S ribosomal subunit. Contacts proteins S3 and S10.

Functionally, binds 16S rRNA, required for the assembly of 30S particles and may also be responsible for determining the conformation of the 16S rRNA at the A site. This is Small ribosomal subunit protein uS14 from Prochlorococcus marinus (strain NATL1A).